Here is a 499-residue protein sequence, read N- to C-terminus: Ubiquitin carboxyl-terminal hydrolase 16 (499 aa).

In terms of domain architecture, USP spans 53-497; it reads VGLINRGNDC…YAYMLYYERV (445 aa). Residue Cys62 is the Nucleophile of the active site. The active-site Proton acceptor is His407.

This sequence belongs to the peptidase C19 family.

It catalyses the reaction Thiol-dependent hydrolysis of ester, thioester, amide, peptide and isopeptide bonds formed by the C-terminal Gly of ubiquitin (a 76-residue protein attached to proteins as an intracellular targeting signal).. This Saccharomyces cerevisiae (strain ATCC 204508 / S288c) (Baker's yeast) protein is Ubiquitin carboxyl-terminal hydrolase 16 (UBP16).